Consider the following 179-residue polypeptide: Large ribosomal subunit protein uL6 (179 aa).

The protein belongs to the universal ribosomal protein uL6 family. Part of the 50S ribosomal subunit.

Its function is as follows. This protein binds to the 23S rRNA, and is important in its secondary structure. It is located near the subunit interface in the base of the L7/L12 stalk, and near the tRNA binding site of the peptidyltransferase center. The protein is Large ribosomal subunit protein uL6 of Chlorobaculum tepidum (strain ATCC 49652 / DSM 12025 / NBRC 103806 / TLS) (Chlorobium tepidum).